Reading from the N-terminus, the 357-residue chain is Peptide chain release factor 1 (357 aa).

At glutamine 236 the chain carries N5-methylglutamine.

This sequence belongs to the prokaryotic/mitochondrial release factor family. Methylated by PrmC. Methylation increases the termination efficiency of RF1.

Its subcellular location is the cytoplasm. Functionally, peptide chain release factor 1 directs the termination of translation in response to the peptide chain termination codons UAG and UAA. The polypeptide is Peptide chain release factor 1 (Mycolicibacterium gilvum (strain PYR-GCK) (Mycobacterium gilvum (strain PYR-GCK))).